The following is a 243-amino-acid chain: 23S rRNA (guanosine-2'-O-)-methyltransferase RlmB (243 aa).

Glycine 196, isoleucine 216, and leucine 225 together coordinate S-adenosyl-L-methionine.

This sequence belongs to the class IV-like SAM-binding methyltransferase superfamily. RNA methyltransferase TrmH family. RlmB subfamily. Homodimer.

The protein localises to the cytoplasm. It catalyses the reaction guanosine(2251) in 23S rRNA + S-adenosyl-L-methionine = 2'-O-methylguanosine(2251) in 23S rRNA + S-adenosyl-L-homocysteine + H(+). Its function is as follows. Specifically methylates the ribose of guanosine 2251 in 23S rRNA. The chain is 23S rRNA (guanosine-2'-O-)-methyltransferase RlmB from Salmonella typhi.